The sequence spans 94 residues: Small ribosomal subunit protein bS18 (94 aa).

Belongs to the bacterial ribosomal protein bS18 family. Part of the 30S ribosomal subunit. Forms a tight heterodimer with protein bS6.

Its function is as follows. Binds as a heterodimer with protein bS6 to the central domain of the 16S rRNA, where it helps stabilize the platform of the 30S subunit. In Leptospira biflexa serovar Patoc (strain Patoc 1 / Ames), this protein is Small ribosomal subunit protein bS18.